The primary structure comprises 505 residues: Kinesin light chain 3 (505 aa).

The interval 1 to 20 (MSVQVAAPGGLGLGLERPSP) is disordered. Residues 88 to 150 (LLALSAHVGA…EEEKSHLEFL (63 aa)) adopt a coiled-coil conformation. The segment at 157 to 193 (DPPAESQQPESPPRRDSLASLFPSEEEERRGPEAVGA) is disordered. S173 is modified (phosphoserine). 5 TPR repeats span residues 207 to 240 (LRTL…LERS), 249 to 282 (ATML…REQT), 291 to 324 (AATL…REKV), 333 to 366 (AKQL…YEAL), and 375 to 408 (AKTK…EALP). The disordered stretch occupies residues 409–505 (APLGAPNTGT…STSTQDLGPR (97 aa)). Residues 416–434 (TGTTSDTQQQTLSRSSSFS) are compositionally biased toward low complexity. Residues 435–453 (KLRESIRRGSEKLVSRLRG) show a composition bias toward basic and acidic residues. S467 carries the post-translational modification Phosphoserine. Polar residues predominate over residues 489–505 (SEASRTLSTSTQDLGPR). The residue at position 499 (T499) is a Phosphothreonine.

This sequence belongs to the kinesin light chain family. In terms of assembly, oligomer composed of two heavy chains and two light chains. Associates with microtubulin in an ATP-dependent manner. Interacts with KIF5C. Interacts with ODF1. Interacts with LRGUK. Interacts with VDAC2.

The protein localises to the cytoplasm. It is found in the cytoskeleton. Its subcellular location is the mitochondrion. Its function is as follows. Kinesin is a microtubule-associated force-producing protein that may play a role in organelle transport. Plays a role during spermiogenesis in the development of the sperm tail midpiece and in the normal function of spermatozoa. May play a role in the formation of the mitochondrial sheath formation in the developing spermatid midpiece. The sequence is that of Kinesin light chain 3 (KLC3) from Bos taurus (Bovine).